The primary structure comprises 261 residues: U1 small nuclear ribonucleoprotein 70 kDa homolog (261 aa).

Positions lysine 100–glycine 178 constitute an RRM domain. Positions glycine 192–asparagine 261 are disordered. Residues tyrosine 198–serine 215 show a composition bias toward basic and acidic residues. The span at glycine 216–phenylalanine 235 shows a compositional bias: gly residues.

In terms of assembly, component of the spliceosome, where it is associated with snRNP U1. Associates with U1 snRNA.

Its subcellular location is the nucleus. Functionally, involved in nuclear mRNA splicing. Essential for growth. In Schizosaccharomyces pombe (strain 972 / ATCC 24843) (Fission yeast), this protein is U1 small nuclear ribonucleoprotein 70 kDa homolog.